We begin with the raw amino-acid sequence, 130 residues long: Small ribosomal subunit protein uS11c (130 aa).

The protein belongs to the universal ribosomal protein uS11 family. As to quaternary structure, part of the 30S ribosomal subunit.

It is found in the plastid. The protein localises to the chloroplast. This Tupiella akineta (Green alga) protein is Small ribosomal subunit protein uS11c.